We begin with the raw amino-acid sequence, 110 residues long: MRQVTIPLIQSKSMFCVIYRSSKRDQTYLYVEKKDDFSRVPEALMKGFGQPQLAMMLPLDGRKKLVNAELEKVKQALSEQGYYLQLPPPPEDLLKQHLSSVGQNTSSADR.

The YcgL domain occupies 14–98 (MFCVIYRSSK…PPEDLLKQHL (85 aa)). A disordered region spans residues 87 to 110 (PPPPEDLLKQHLSSVGQNTSSADR). The segment covering 97-110 (HLSSVGQNTSSADR) has biased composition (polar residues).

The chain is Protein YcgL from Salmonella newport (strain SL254).